Reading from the N-terminus, the 223-residue chain is DnaJ homolog subfamily B member 9 (223 aa).

An N-terminal signal peptide occupies residues 1-23; sequence MATPQSIFIFAICILMITELILA. Residues 26 to 90 enclose the J domain; it reads SYYDILGVPK…NRRKEYDTLG (65 aa). The segment at 91–223 is divergent targeting domain; the sequence is HSAFTNGKGQ…VTTYTDCSGQ (133 aa). Phosphoserine is present on serine 133.

In terms of assembly, interacts with HSPA5/BiP; interaction is direct. Interacts with ERN1/IRE1 (via the luminal region). Interacts with DERL1.

It localises to the endoplasmic reticulum lumen. In terms of biological role, co-chaperone for Hsp70 protein HSPA5/BiP that acts as a key repressor of the ERN1/IRE1-mediated unfolded protein response (UPR). J domain-containing co-chaperones stimulate the ATPase activity of Hsp70 proteins and are required for efficient substrate recognition by Hsp70 proteins. In the unstressed endoplasmic reticulum, interacts with the luminal region of ERN1/IRE1 and selectively recruits HSPA5/BiP: HSPA5/BiP disrupts the dimerization of the active ERN1/IRE1 luminal region, thereby inactivating ERN1/IRE1. Also involved in endoplasmic reticulum-associated degradation (ERAD) of misfolded proteins. Required for survival of B-cell progenitors and normal antibody production. The sequence is that of DnaJ homolog subfamily B member 9 from Pongo abelii (Sumatran orangutan).